The chain runs to 121 residues: Protein TusC (121 aa).

The protein belongs to the DsrF/TusC family. In terms of assembly, heterohexamer, formed by a dimer of trimers. The hexameric TusBCD complex contains 2 copies each of TusB, TusC and TusD. The TusBCD complex interacts with TusE.

It is found in the cytoplasm. Part of a sulfur-relay system required for 2-thiolation of 5-methylaminomethyl-2-thiouridine (mnm(5)s(2)U) at tRNA wobble positions. This is Protein TusC from Yersinia pestis bv. Antiqua (strain Antiqua).